We begin with the raw amino-acid sequence, 194 residues long: Protein LURP-one-related 10 (194 aa).

This sequence belongs to the LOR family.

In terms of biological role, might be related to the phospholipid scramblase and tubby-like superfamily of membrane tethered transcription factors. The polypeptide is Protein LURP-one-related 10 (Arabidopsis thaliana (Mouse-ear cress)).